The sequence spans 321 residues: uncharacterized protein (321 aa).

The HTH lysR-type domain maps to 1-58 (MTPAQLRAYSAVVRLGSVRAAAAELGLSDAGVSMHVAALRKELDDPLFTRTGAGLAFT). The segment at residues 18–37 (VRAAAAELGLSDAGVSMHVA) is a DNA-binding region (H-T-H motif).

The protein belongs to the LysR transcriptional regulatory family.

This is an uncharacterized protein from Mycobacterium tuberculosis (strain CDC 1551 / Oshkosh).